The chain runs to 148 residues: Lysozyme C-1 (148 aa).

An N-terminal signal peptide occupies residues methionine 1–alanine 18. The region spanning lysine 19 to valine 148 is the C-type lysozyme domain. 4 disulfides stabilise this stretch: cysteine 24-cysteine 146, cysteine 48-cysteine 134, cysteine 83-cysteine 99, and cysteine 95-cysteine 113. Catalysis depends on residues glutamate 53 and aspartate 71.

It belongs to the glycosyl hydrolase 22 family. As to quaternary structure, monomer. In terms of tissue distribution, expressed in lung, small intestine and spleen.

It is found in the secreted. The catalysed reaction is Hydrolysis of (1-&gt;4)-beta-linkages between N-acetylmuramic acid and N-acetyl-D-glucosamine residues in a peptidoglycan and between N-acetyl-D-glucosamine residues in chitodextrins.. Functionally, lysozymes have primarily a bacteriolytic function; those in tissues and body fluids are associated with the monocyte-macrophage system and enhance the activity of immunoagents. In the intestine they may also have a digestive function. This is Lysozyme C-1 (Lyz1) from Rattus norvegicus (Rat).